The sequence spans 392 residues: Protein NolC (392 aa).

The region spanning 2–71 is the J domain; the sequence is KRDLYETLGV…RAAYDRYGHA (70 aa). Disordered stretches follow at residues 103-142 and 157-244; these read RRDD…QDGA and LGRE…TGLR. Residues 157–170 show a composition bias toward basic and acidic residues; that stretch reads LGREAGHQPEDLRH. Residues 171-185 show a composition bias toward low complexity; that stretch reads LPGLRPYPRRPGLLL. The segment covering 186–203 has biased composition (basic and acidic residues); the sequence is DRTHLPDLRRSRSDDHRS. Residues 227–241 are compositionally biased toward basic residues; that stretch reads HRGRHAYPPLRRGRT.

This is Protein NolC (nolC) from Rhizobium fredii (Sinorhizobium fredii).